Here is a 640-residue protein sequence, read N- to C-terminus: Phosphatidylinositol-binding clathrin assembly protein (640 aa).

S2 is modified (N-acetylserine). In terms of domain architecture, ENTH spans 14-145; sequence QHSVTGSAVS…VSYRQVAFDF (132 aa). A phosphoserine mark is found at S16 and S20. The interval 221–294 is interaction with PIMREG; it reads KYFDMKKNQC…LEGKKIKDST (74 aa). K238 participates in a covalent cross-link: Glycyl lysine isopeptide (Lys-Gly) (interchain with G-Cter in SUMO2). 2 positions are modified to phosphoserine: S303 and S315. The disordered stretch occupies residues 543–568; sequence NGTTKNDVSCSQPGEKKLTGGSNWQP. Residues 544-554 show a composition bias toward polar residues; sequence GTTKNDVSCSQ.

It belongs to the PICALM/SNAP91 family. Binds to clathrin; involves primarily the C-terminal sequences, but the full-length protein is required for full binding capacity. Binds phosphatidylinositol 4,5- bisphosphate. Interacts with PIMREG; this interaction may change the subcellular location into the nucleus. Interacts with AP2A1 (via its alpha-appendage domain). Interacts (via N-terminus) with VAMP2; VAMP3; VAMP7 and VAMP8 (Via N-terminus). Interacts with LC3/MAP1LC3A. As to expression, isoform 2 was found in most tissues examined. Isoform 1 has an overlapping expression pattern but is absent from lung, heart and pancreas. Both isoforms are widely expressed in the brain, higher levels are seen in hippocampus, dentate gyrus, medial habenula nucleus and cerebellar granule cells.

The protein resides in the cell membrane. The protein localises to the membrane. It is found in the clathrin-coated pit. It localises to the golgi apparatus. Its subcellular location is the cytoplasmic vesicle. The protein resides in the clathrin-coated vesicle. The protein localises to the nucleus. In terms of biological role, cytoplasmic adapter protein that plays a critical role in clathrin-mediated endocytosis which is important in processes such as internalization of cell receptors, synaptic transmission or removal of apoptotic cells. Recruits AP-2 and attaches clathrin triskelions to the cytoplasmic side of plasma membrane leading to clathrin-coated vesicles (CCVs) assembly. Furthermore, regulates clathrin-coated vesicle size and maturation by directly sensing and driving membrane curvature. In addition to binding to clathrin, mediates the endocytosis of small R-SNARES (Soluble NSF Attachment Protein REceptors) between plasma membranes and endosomes including VAMP2, VAMP3, VAMP4, VAMP7 or VAMP8. In turn, PICALM-dependent SNARE endocytosis is required for the formation and maturation of autophagic precursors. Modulates thereby autophagy and the turnover of autophagy substrates such as MAPT/TAU or amyloid precursor protein cleaved C-terminal fragment (APP-CTF). This is Phosphatidylinositol-binding clathrin assembly protein (Picalm) from Rattus norvegicus (Rat).